We begin with the raw amino-acid sequence, 73 residues long: DNA-directed RNA polymerase subunit omega (73 aa).

Belongs to the RNA polymerase subunit omega family. As to quaternary structure, the RNAP catalytic core consists of 2 alpha, 1 beta, 1 beta' and 1 omega subunit. When a sigma factor is associated with the core the holoenzyme is formed, which can initiate transcription.

It catalyses the reaction RNA(n) + a ribonucleoside 5'-triphosphate = RNA(n+1) + diphosphate. Functionally, promotes RNA polymerase assembly. Latches the N- and C-terminal regions of the beta' subunit thereby facilitating its interaction with the beta and alpha subunits. The protein is DNA-directed RNA polymerase subunit omega of Oleidesulfovibrio alaskensis (strain ATCC BAA-1058 / DSM 17464 / G20) (Desulfovibrio alaskensis).